A 246-amino-acid polypeptide reads, in one-letter code: Small ribosomal subunit protein uS2 (246 aa).

The protein belongs to the universal ribosomal protein uS2 family.

The chain is Small ribosomal subunit protein uS2 from Dictyoglomus turgidum (strain DSM 6724 / Z-1310).